The primary structure comprises 495 residues: Cobyric acid synthase (495 aa).

Residues 253-446 (KISIAIVYFP…FHGIFDGSAF (194 aa)) enclose the GATase cobBQ-type domain. The active-site Nucleophile is Cys-334. Residue His-438 is part of the active site.

Belongs to the CobB/CobQ family. CobQ subfamily.

Its pathway is cofactor biosynthesis; adenosylcobalamin biosynthesis. In terms of biological role, catalyzes amidations at positions B, D, E, and G on adenosylcobyrinic A,C-diamide. NH(2) groups are provided by glutamine, and one molecule of ATP is hydrogenolyzed for each amidation. This is Cobyric acid synthase from Chlorobium phaeobacteroides (strain BS1).